Consider the following 147-residue polypeptide: NADH-ubiquinone oxidoreductase chain 3 (147 aa).

3 helical membrane-spanning segments follow: residues 6–26 (LFILFVSIIALLFLLINLVFA), 60–80 (AICFVILDLEIFTMFPYVGSL), and 84–104 (TFYSLVVILGFMFVVSAGFVF).

It belongs to the complex I subunit 3 family.

The protein localises to the mitochondrion membrane. The enzyme catalyses a ubiquinone + NADH + 5 H(+)(in) = a ubiquinol + NAD(+) + 4 H(+)(out). In terms of biological role, core subunit of the mitochondrial membrane respiratory chain NADH dehydrogenase (Complex I) that is believed to belong to the minimal assembly required for catalysis. Complex I functions in the transfer of electrons from NADH to the respiratory chain. The immediate electron acceptor for the enzyme is believed to be ubiquinone. The protein is NADH-ubiquinone oxidoreductase chain 3 (ndh-3) of Neurospora crassa (strain ATCC 24698 / 74-OR23-1A / CBS 708.71 / DSM 1257 / FGSC 987).